A 279-amino-acid polypeptide reads, in one-letter code: Eukaryotic translation initiation factor 3 subunit G (279 aa).

Disordered regions lie at residues 69–90 (AKYG…QLGE) and 149–193 (LNGG…EARD). S77 carries the phosphoserine modification. The RRM domain maps to 196–275 (TTLKVSQLNT…LILHLEWSKK (80 aa)).

It belongs to the eIF-3 subunit G family. In terms of assembly, component of the eukaryotic translation initiation factor 3 (eIF-3) complex.

It is found in the cytoplasm. Its function is as follows. RNA-binding component of the eukaryotic translation initiation factor 3 (eIF-3) complex, which is involved in protein synthesis of a specialized repertoire of mRNAs and, together with other initiation factors, stimulates binding of mRNA and methionyl-tRNAi to the 40S ribosome. The eIF-3 complex specifically targets and initiates translation of a subset of mRNAs involved in cell proliferation. This subunit can bind 18S rRNA. The chain is Eukaryotic translation initiation factor 3 subunit G from Lodderomyces elongisporus (strain ATCC 11503 / CBS 2605 / JCM 1781 / NBRC 1676 / NRRL YB-4239) (Yeast).